Reading from the N-terminus, the 772-residue chain is Potassium transporter 24 (772 aa).

The Cytoplasmic segment spans residues 1–23 (MDVEGGGAAARRKGGWWWWREEA). The helical transmembrane segment at 24–44 (VLAYQSLGVVYGEVAAAPLYV) threads the bilayer. The Extracellular segment spans residues 45-66 (YRSAFAGGDIEHSAGNEEIYGA). Residues 67–87 (LSLVFWTLTLVPLAKYVLLVL) form a helical membrane-spanning segment. The Cytoplasmic portion of the chain corresponds to 88 to 150 (RADDAGEGGT…ALERHRVLQR (63 aa)). Residues 151–171 (LLLLLALLGTCMVIGDGVLTP) form a helical membrane-spanning segment. Topologically, residues 172-192 (AVSVFSAVSGLELSMDKDQHK) are extracellular. A helical transmembrane segment spans residues 193 to 213 (YILLPITCVILVCLFALQHYG). Topologically, residues 214–216 (THR) are cytoplasmic. A helical transmembrane segment spans residues 217–237 (VGFLFAPIVCLWLLCISIIGV). Residues 238-265 (YNIIHWNPHVYQALSPYYMYKFLRKTQT) are Extracellular-facing. Residues 266 to 286 (GGWMSLGGILLCVTGSEAMYA) form a helical membrane-spanning segment. The Cytoplasmic segment spans residues 287 to 298 (DLGHFTQNSIKM). Residues 299–319 (AFTLLVYPALVLAYMGQAAYI) form a helical membrane-spanning segment. Over 320 to 344 (SRHHNFEDGSHIGFYVSVPEKIRWP) the chain is Extracellular. The helical transmembrane segment at 345 to 365 (VLGIAILASVVGSQAIITGTF) threads the bilayer. The Cytoplasmic segment spans residues 366-392 (SIIKQCSSLNCFPRVKIVHTSSTVHGQ). Residues 393 to 413 (IYIPEINWILMILCLSVTIGF) traverse the membrane as a helical segment. Topologically, residues 414–423 (RDTKHLTNAQ) are extracellular. A helical membrane pass occupies residues 424-444 (GLAVITVMLVTTCLMSLVILL). Topologically, residues 445–449 (CWNKS) are cytoplasmic. Residues 450–470 (IVYALSFLLFFGAIEVIYFAA) form a helical membrane-spanning segment. At 471 to 477 (SLVKFHE) the chain is on the extracellular side. The chain crosses the membrane as a helical span at residues 478 to 498 (GAWVPVTLSFIFMMVMCVWHY). Over 499–772 (GTKKKYEFDV…TVEVGMICLV (274 aa)) the chain is Cytoplasmic. Positions 656 to 684 (EEGEFDGSDSTGSSAHKEINPNTTAPKPK) are disordered.

The protein belongs to the HAK/KUP transporter (TC 2.A.72.3) family.

It localises to the membrane. Functionally, high-affinity potassium transporter. In Oryza sativa subsp. japonica (Rice), this protein is Potassium transporter 24 (HAK24).